The primary structure comprises 335 residues: Protein BIG1 (335 aa).

An N-terminal signal peptide occupies residues 1-17 (MQTVLKYLLLIMCGSFC). The Lumenal portion of the chain corresponds to 20 to 275 (EELQNQTNVP…FDSQLIENNR (256 aa)). N-linked (GlcNAc...) asparagine glycosylation is found at Asn24 and Asn144. Residues 276–296 (GLLQLIFTILVGYILIQFFFT) form a helical membrane-spanning segment. Over 297 to 335 (KKTIVDEKITNKKDNVKQTSPQLLKKVQEIQKKPSQQVS) the chain is Cytoplasmic.

It belongs to the BIG1 family. Post-translationally, N-glycosylated.

It is found in the endoplasmic reticulum membrane. Required for normal beta-1,6-glucan synthesis. In Saccharomyces cerevisiae (strain ATCC 204508 / S288c) (Baker's yeast), this protein is Protein BIG1 (BIG1).